We begin with the raw amino-acid sequence, 372 residues long: tRNA-specific 2-thiouridylase MnmA (372 aa).

ATP is bound by residues 7-14 (GLSGGVDS) and methionine 33. Residues 104–106 (NPD) are interaction with target base in tRNA. Cysteine 109 serves as the catalytic Nucleophile. An intrachain disulfide couples cysteine 109 to cysteine 202. Glycine 134 contacts ATP. Residues 152–154 (KDQ) form an interaction with tRNA region. Cysteine 202 (cysteine persulfide intermediate) is an active-site residue. An interaction with tRNA region spans residues 310-311 (RY).

It belongs to the MnmA/TRMU family.

It is found in the cytoplasm. The enzyme catalyses S-sulfanyl-L-cysteinyl-[protein] + uridine(34) in tRNA + AH2 + ATP = 2-thiouridine(34) in tRNA + L-cysteinyl-[protein] + A + AMP + diphosphate + H(+). Functionally, catalyzes the 2-thiolation of uridine at the wobble position (U34) of tRNA, leading to the formation of s(2)U34. This chain is tRNA-specific 2-thiouridylase MnmA, found in Mesomycoplasma hyopneumoniae (strain 7448) (Mycoplasma hyopneumoniae).